We begin with the raw amino-acid sequence, 69 residues long: Cold shock-like protein CspC (69 aa).

The CSD domain occupies 6–66; that stretch reads GQVKWFNESK…GQKGPAAVNV (61 aa).

It is found in the cytoplasm. This is Cold shock-like protein CspC (cspC) from Buchnera aphidicola subsp. Acyrthosiphon pisum (strain APS) (Acyrthosiphon pisum symbiotic bacterium).